The sequence spans 61 residues: Potassium channel toxin alpha-KTx 6.6 (61 aa).

The first 23 residues, 1-23 (MNAKFILLLLVVATTMLLPDTQG), serve as a signal peptide directing secretion. Disulfide bonds link cysteine 29/cysteine 50, cysteine 35/cysteine 55, cysteine 39/cysteine 57, and cysteine 45/cysteine 60. A Cysteine amide modification is found at cysteine 60.

This sequence belongs to the short scorpion toxin superfamily. Potassium channel inhibitor family. Alpha-KTx 06 subfamily. Expressed by the venom gland.

Its subcellular location is the secreted. Its function is as follows. Blocker of voltage-gated potassium channels. This Opistophthalmus carinatus (African yellow leg scorpion) protein is Potassium channel toxin alpha-KTx 6.6.